The chain runs to 228 residues: Ankyrin repeat domain-containing protein 46 (228 aa).

ANK repeat units lie at residues 11–40, 44–74, 77–103, and 107–138; these read QTNV…DPNI, RGRT…PLAT, QGNT…KIDI, and QGAT…EVKG. A helical membrane pass occupies residues 195-215; it reads VLLLILVIALLSLGIAYYVSG.

It localises to the membrane. This Rattus norvegicus (Rat) protein is Ankyrin repeat domain-containing protein 46 (Ankrd46).